Reading from the N-terminus, the 188-residue chain is Mediator of RNA polymerase II transcription subunit 11 (188 aa).

A coiled-coil region spans residues 46–72; the sequence is KNKMEDNANNFKKLITQVENELSAQMQ. The segment at 116 to 188 is disordered; the sequence is DPTSDEPQTT…MTDDDDDMEQ (73 aa). The span at 123 to 141 shows a compositional bias: acidic residues; that stretch reads QTTEEDEEDGSDDLNEDGA. Positions 146 to 155 are enriched in low complexity; the sequence is SSTVTSSTTD. The span at 171 to 180 shows a compositional bias: basic and acidic residues; it reads SQEESGRQMT.

It belongs to the Mediator complex subunit 11 family. In terms of assembly, component of the Mediator complex.

The protein resides in the nucleus. Functionally, component of the Mediator complex, a coactivator involved in the regulated transcription of nearly all RNA polymerase II-dependent genes. Mediator functions as a bridge to convey information from gene-specific regulatory proteins to the basal RNA polymerase II transcription machinery. Mediator is recruited to promoters by direct interactions with regulatory proteins and serves as a scaffold for the assembly of a functional pre-initiation complex with RNA polymerase II and the general transcription factors. In Caenorhabditis elegans, this protein is Mediator of RNA polymerase II transcription subunit 11 (mdt-11).